The following is a 165-amino-acid chain: Methylated-DNA--protein-cysteine methyltransferase (165 aa).

The active-site Nucleophile; methyl group acceptor is the C126.

It belongs to the MGMT family.

The protein resides in the cytoplasm. It catalyses the reaction a 6-O-methyl-2'-deoxyguanosine in DNA + L-cysteinyl-[protein] = S-methyl-L-cysteinyl-[protein] + a 2'-deoxyguanosine in DNA. The enzyme catalyses a 4-O-methyl-thymidine in DNA + L-cysteinyl-[protein] = a thymidine in DNA + S-methyl-L-cysteinyl-[protein]. In terms of biological role, involved in the cellular defense against the biological effects of O6-methylguanine (O6-MeG) and O4-methylthymine (O4-MeT) in DNA. Repairs the methylated nucleobase in DNA by stoichiometrically transferring the methyl group to a cysteine residue in the enzyme. This is a suicide reaction: the enzyme is irreversibly inactivated. The protein is Methylated-DNA--protein-cysteine methyltransferase of Mycobacterium bovis (strain ATCC BAA-935 / AF2122/97).